We begin with the raw amino-acid sequence, 487 residues long: Serine/threonine-protein kinase 4 (487 aa).

Methionine 1 is modified (N-acetylmethionine). Phosphothreonine is present on threonine 3. The 252-residue stretch at phenylalanine 30 to valine 281 folds into the Protein kinase domain. Residues leucine 36–valine 44 and lysine 59 each bind ATP. The active-site Proton acceptor is the aspartate 149. Threonine 183 carries the phosphothreonine; by autocatalysis modification. Serine 265 carries the phosphoserine modification. A coiled-coil region spans residues leucine 290 to arginine 310. The span at lysine 303–valine 312 shows a compositional bias: basic and acidic residues. A disordered region spans residues lysine 303 to arginine 332. A compositionally biased stretch (acidic residues) spans aspartate 313–aspartate 326. Serine 320 carries the phosphoserine modification. Threonine 340 and threonine 367 each carry phosphothreonine. Threonine 387 carries the phosphothreonine; by PKB/AKT1 modification. 2 positions are modified to phosphoserine: serine 410 and serine 414. Tyrosine 433 carries the post-translational modification Phosphotyrosine. The region spanning tyrosine 433–lysine 480 is the SARAH domain.

Belongs to the protein kinase superfamily. STE Ser/Thr protein kinase family. STE20 subfamily. Homodimer; mediated via the coiled-coil region. Interacts with NORE1, which inhibits autoactivation. Interacts with and stabilizes SAV1. Interacts with RASSF1. Interacts with FOXO3. Interacts with RASSF2 (via SARAH domain). Interacts with AR, PKB/AKT1, TNNI3 and SIRT1. Interacts with DLG5 (via PDZ domain 3). Interacts with MARK3 and SCRIB in the presence of DLG5. Requires Mg(2+) as cofactor. Autophosphorylated on serine and threonine residues. Phosphorylation at Thr-387 by PKB/AKT1, leads to inhibition of its: kinase activity, nuclear translocation and autophosphorylation at Thr-183. It also diminishes its cleavage by caspases and its ability to phosphorylate FOXO3. In terms of processing, proteolytically cleaved by caspase-3 during apoptosis at Asp-326 and Asp-349 resulting in a 37 kDa or a 39 kDa subunit respectively. The 39 kDa subunit is further cleaved into the 37 kDa form. Proteolytic cleavage results in kinase activation and nuclear translocation of the truncated form (MST1/N). It is less likely that cleavage at Asp-349 is a prerequisite for activation as this site is not conserved in the murine ortholog.

The protein resides in the cytoplasm. Its subcellular location is the nucleus. It catalyses the reaction L-seryl-[protein] + ATP = O-phospho-L-seryl-[protein] + ADP + H(+). It carries out the reaction L-threonyl-[protein] + ATP = O-phospho-L-threonyl-[protein] + ADP + H(+). Inhibited by the C-terminal non-catalytic region. Activated by caspase-cleavage. Full activation also requires homodimerization and autophosphorylation of Thr-183. Activated by RASSF1 which acts by preventing its dephosphorylation. Its function is as follows. Stress-activated, pro-apoptotic kinase which, following caspase-cleavage, enters the nucleus and induces chromatin condensation followed by internucleosomal DNA fragmentation. Key component of the Hippo signaling pathway which plays a pivotal role in organ size control and tumor suppression by restricting proliferation and promoting apoptosis. The core of this pathway is composed of a kinase cascade wherein STK3/MST2 and STK4/MST1, in complex with its regulatory protein SAV1, phosphorylates and activates LATS1/2 in complex with its regulatory protein MOB1, which in turn phosphorylates and inactivates YAP1 oncoprotein and WWTR1/TAZ. Phosphorylation of YAP1 by LATS2 inhibits its translocation into the nucleus to regulate cellular genes important for cell proliferation, cell death, and cell migration. STK3/MST2 and STK4/MST1 are required to repress proliferation of mature hepatocytes, to prevent activation of facultative adult liver stem cells (oval cells), and to inhibit tumor formation. Phosphorylates 'Ser-14' of histone H2B (H2BS14ph) during apoptosis. Phosphorylates FOXO3 upon oxidative stress, which results in its nuclear translocation and cell death initiation. Phosphorylates MOBKL1A, MOBKL1B and RASSF2. Phosphorylates TNNI3 (cardiac Tn-I) and alters its binding affinity to TNNC1 (cardiac Tn-C) and TNNT2 (cardiac Tn-T). Phosphorylates FOXO1 on 'Ser-212' and regulates its activation and stimulates transcription of PMAIP1 in a FOXO1-dependent manner. Phosphorylates SIRT1 and inhibits SIRT1-mediated p53/TP53 deacetylation, thereby promoting p53/TP53 dependent transcription and apoptosis upon DNA damage. Acts as an inhibitor of PKB/AKT1. Phosphorylates AR on 'Ser-650' and suppresses its activity by intersecting with PKB/AKT1 signaling and antagonizing formation of AR-chromatin complexes. The chain is Serine/threonine-protein kinase 4 (STK4) from Colobus guereza (Mantled guereza).